Consider the following 88-residue polypeptide: Beta-defensin 115 (88 aa).

The N-terminal stretch at 1 to 27 is a signal peptide; it reads MLPDHFSPLSGDIKLSVLALVVLVVLA. 3 cysteine pairs are disulfide-bonded: cysteine 38-cysteine 65, cysteine 45-cysteine 59, and cysteine 49-cysteine 66.

Belongs to the beta-defensin family.

The protein localises to the secreted. Has antibacterial activity. The sequence is that of Beta-defensin 115 (DEFB115) from Homo sapiens (Human).